The sequence spans 415 residues: Nuclear hormone receptor family member nhr-153 (415 aa).

The segment at residues 26–105 (PSVCQICRNP…AGMNPMAIQA (80 aa)) is a DNA-binding region (nuclear receptor). NR C4-type zinc fingers lie at residues 29–49 (CQIC…CNGC) and 65–88 (CFKV…CRAC). The region spanning 170–406 (DQRDLSTALS…DPEVLKKKCI (237 aa)) is the NR LBD domain.

The protein belongs to the nuclear hormone receptor family.

It localises to the nucleus. Functionally, orphan nuclear receptor. The chain is Nuclear hormone receptor family member nhr-153 (nhr-153) from Caenorhabditis elegans.